The primary structure comprises 243 residues: Type II restriction enzyme NlaIV (243 aa).

It carries out the reaction Endonucleolytic cleavage of DNA to give specific double-stranded fragments with terminal 5'-phosphates.. Its function is as follows. A P subtype restriction enzyme that recognizes the double-stranded sequence 5'-GGNNCC-3' and cleaves after N-3. This Neisseria lactamica protein is Type II restriction enzyme NlaIV (nlaIVR).